The following is a 285-amino-acid chain: Bifunctional protein FolD 2 (285 aa).

Residues 164–166 (GRS), Ser189, and Val230 each bind NADP(+).

Belongs to the tetrahydrofolate dehydrogenase/cyclohydrolase family. As to quaternary structure, homodimer.

It carries out the reaction (6R)-5,10-methylene-5,6,7,8-tetrahydrofolate + NADP(+) = (6R)-5,10-methenyltetrahydrofolate + NADPH. The catalysed reaction is (6R)-5,10-methenyltetrahydrofolate + H2O = (6R)-10-formyltetrahydrofolate + H(+). It functions in the pathway one-carbon metabolism; tetrahydrofolate interconversion. Its function is as follows. Catalyzes the oxidation of 5,10-methylenetetrahydrofolate to 5,10-methenyltetrahydrofolate and then the hydrolysis of 5,10-methenyltetrahydrofolate to 10-formyltetrahydrofolate. In Geobacter metallireducens (strain ATCC 53774 / DSM 7210 / GS-15), this protein is Bifunctional protein FolD 2.